Reading from the N-terminus, the 127-residue chain is Peroxiredoxin-2 (127 aa).

Positions 1-125 (LFFYPLDFTF…ALRLVQGXQY (125 aa)) constitute a Thioredoxin domain. The active-site Cysteine sulfenic acid (-SOH) intermediate is C12. The residue at position 73 (S73) is a Phosphoserine.

This sequence belongs to the peroxiredoxin family. AhpC/Prx1 subfamily. As to quaternary structure, homodimer; disulfide-linked, upon oxidation. 5 homodimers assemble to form a ring-like decamer. Interacts with TIPIN. The enzyme can be inactivated by further oxidation of the cysteine sulfenic acid (C(P)-SOH) to sulphinic acid (C(P)-SO2H) instead of its condensation to a disulfide bond. It can be reactivated by forming a transient disulfide bond with sulfiredoxin SRXN1, which reduces the cysteine sulfinic acid in an ATP- and Mg-dependent manner. Post-translationally, acetylation increases resistance to transition to high molecular-mass complexes. Deacetylated by HDAC6 which decreases reducing activity.

Its subcellular location is the cytoplasm. It catalyses the reaction a hydroperoxide + [thioredoxin]-dithiol = an alcohol + [thioredoxin]-disulfide + H2O. Thiol-specific peroxidase that catalyzes the reduction of hydrogen peroxide and organic hydroperoxides to water and alcohols, respectively. Plays a role in cell protection against oxidative stress by detoxifying peroxides and as sensor of hydrogen peroxide-mediated signaling events. Might participate in the signaling cascades of growth factors and tumor necrosis factor-alpha by regulating the intracellular concentrations of H(2)O(2). The protein is Peroxiredoxin-2 (PRDX2) of Sus scrofa (Pig).